We begin with the raw amino-acid sequence, 570 residues long: Formate--tetrahydrofolate ligase (570 aa).

65 to 72 serves as a coordination point for ATP; it reads TPHGEGKT.

Belongs to the formate--tetrahydrofolate ligase family.

The catalysed reaction is (6S)-5,6,7,8-tetrahydrofolate + formate + ATP = (6R)-10-formyltetrahydrofolate + ADP + phosphate. The protein operates within one-carbon metabolism; tetrahydrofolate interconversion. This chain is Formate--tetrahydrofolate ligase, found in Shewanella putrefaciens (strain CN-32 / ATCC BAA-453).